Consider the following 290-residue polypeptide: Ribosomal RNA small subunit methyltransferase A (290 aa).

Positions 27, 29, 54, 75, 100, and 125 each coordinate S-adenosyl-L-methionine.

Belongs to the class I-like SAM-binding methyltransferase superfamily. rRNA adenine N(6)-methyltransferase family. RsmA subfamily.

It is found in the cytoplasm. The catalysed reaction is adenosine(1518)/adenosine(1519) in 16S rRNA + 4 S-adenosyl-L-methionine = N(6)-dimethyladenosine(1518)/N(6)-dimethyladenosine(1519) in 16S rRNA + 4 S-adenosyl-L-homocysteine + 4 H(+). Functionally, specifically dimethylates two adjacent adenosines (A1518 and A1519) in the loop of a conserved hairpin near the 3'-end of 16S rRNA in the 30S particle. May play a critical role in biogenesis of 30S subunits. The sequence is that of Ribosomal RNA small subunit methyltransferase A from Streptococcus pneumoniae (strain Hungary19A-6).